The primary structure comprises 2909 residues: Micronemal protein 15 (2909 aa).

The signal sequence occupies residues 1-29 (MVFRATREPFRLPLVAAFIALFLLKGVTC). Asparagine 512, asparagine 563, asparagine 792, asparagine 813, asparagine 986, asparagine 1007, asparagine 1057, asparagine 1142, asparagine 1319, asparagine 1395, and asparagine 1713 each carry an N-linked (GlcNAc...) asparagine glycan. The TSP type-1 1 domain occupies 1755 to 1811 (TAIVGEWGEWSACTGTCFSQWWTPKRTRTRLVLAELSHSQIPSVSETATCLDLPPCG). The tract at residues 1937–2073 (RRKGIMSRRR…RSQARNQTPD (137 aa)) is disordered. Positions 1967 to 1977 (SEQSGKASQNG) are enriched in polar residues. An N-linked (GlcNAc...) asparagine glycan is attached at asparagine 1976. A compositionally biased stretch (basic residues) spans 1978–1988 (SRRHRASRKQK). Positions 2004–2016 (GESTLHGTGTNAY) are enriched in polar residues. The span at 2049 to 2065 (KARRARRGAGRFRKSRS) shows a compositional bias: basic residues. An N-linked (GlcNAc...) asparagine glycan is attached at asparagine 2333. One can recognise a TSP type-1 2 domain in the interval 2484-2549 (TCDYTEWSEW…EKCDWMPVCP (66 aa)). 3 cysteine pairs are disulfide-bonded: cysteine 2485-cysteine 2528, cysteine 2496-cysteine 2500, and cysteine 2542-cysteine 2548. The segment at 2552–2587 (EGEEEDDATGGVEPRGEPIVPPWSPERPTDENNQAM) is disordered. Residue asparagine 2706 is glycosylated (N-linked (GlcNAc...) asparagine). Residues 2709–2729 (TWVICLLLGVGGGICFVLSCV) form a helical membrane-spanning segment. N-linked (GlcNAc...) asparagine glycosylation is found at asparagine 2751, asparagine 2768, and asparagine 2793. Residues 2759–2846 (ESHKLRRQGN…IGQTSPTQQR (88 aa)) are disordered. Residues 2801–2815 (PEEEPWQFEDRDEEP) are compositionally biased toward acidic residues. Over residues 2837–2846 (IGQTSPTQQR) the composition is skewed to polar residues.

In terms of assembly, component of a complex, at least composed of cysteine repeat modular protein A (CRMPa), cysteine repeat modular protein B (CRMPb), micronemal protein 15 (MIC15) and thrombospondin type 1 domain-containing protein (TSP1).

It is found in the membrane. Required for rhoptry secretion. Plays a role in host cell invasion. The polypeptide is Micronemal protein 15 (Toxoplasma gondii).